The chain runs to 459 residues: MESIQPWIEKFIKQAQQQRSQSTKDYPTSYRNLRVKLSFGYGNFTSIPWFAFLGEGQEASNGIYPVILYYKDFDELVLAYGISDTNEPHAQWQFSSDIPKTIAEYFQATSGVYPKKYGQSYYACSQKVSQGIDYTRFASMLDNIINDYKLIFNSGKSVIPPMSKTESYCLEDALNDLFIPETTIETILKRLTIKKNIILQGPPGVGKTFVARRLAYLLTGEKAPQRVNMVQFHQSYSYEDFIQGYRPNGVGFRRKDGIFYNFCQQAKEQPEKKYIFIIDEINRANLSKVFGEVMMLMEHDKRGENWSVPLTYSENDEERFYVPENVYIIGLMNTADRSLAVVDYALRRRFSFIDIEPGFDTPQFRNFLLNKKAEPSFVESLCQKMNELNQEISKEATILGKGFRIGHSYFCCGLEDGTSPDTQWLNEIVMTDIAPLLEEYFFDDPYKQQKWTNKLLGDS.

GTP contacts are provided by residues 201 to 208 (GPPGVGKT), 300 to 303 (DKRG), and 333 to 336 (NTAD).

In terms of biological role, recognizes N4- and C5-methylcytosine (and 5-hydroxy-methylcytosines) produced by a broad range of DNA methylases and appears to act against 5-methylcytosine preceded by a purine residue. Binds to DNA containing methylated cytosines; also binds to GTP. Isoform 33 kDa is less active than isoform 51 kDa and may play a role in regulating the activity of isoform 51 kDa by competing with it in DNA and protein binding abilities. In Escherichia coli (strain K12), this protein is Type IV methyl-directed restriction enzyme EcoKMcrB subunit (mcrB).